The sequence spans 294 residues: Ribosomal RNA small subunit methyltransferase H (294 aa).

S-adenosyl-L-methionine is bound by residues 37-39 (GGH), aspartate 58, leucine 93, aspartate 105, and glutamine 112.

The protein belongs to the methyltransferase superfamily. RsmH family.

It localises to the cytoplasm. The enzyme catalyses cytidine(1402) in 16S rRNA + S-adenosyl-L-methionine = N(4)-methylcytidine(1402) in 16S rRNA + S-adenosyl-L-homocysteine + H(+). In terms of biological role, specifically methylates the N4 position of cytidine in position 1402 (C1402) of 16S rRNA. The protein is Ribosomal RNA small subunit methyltransferase H of Fervidobacterium nodosum (strain ATCC 35602 / DSM 5306 / Rt17-B1).